Reading from the N-terminus, the 579-residue chain is Mycobactin import ATP-binding/permease protein IrtB (579 aa).

Topologically, residues 1–16 (MIRTWIALVPNDHRAR) are cytoplasmic. The helical transmembrane segment at 17 to 37 (LIGFALLAFCSVVARAVGTVL) threads the bilayer. In terms of domain architecture, ABC transmembrane type-1 spans 17–299 (LIGFALLAFC…VSELAPALES (283 aa)). Over 38–52 (LVPLMAALFGEAPQR) the chain is Periplasmic. Residues 53–73 (AWLWLGWLSAATVAGWVLDAV) form a helical membrane-spanning segment. The Cytoplasmic segment spans residues 74–123 (TARIGIELGFAVLNHTQHDVADRLPVVRLDWFTAENTATARQAIAATGPE). A helical transmembrane segment spans residues 124 to 146 (LVGLVVNLVTPLTSAILLPAVIA). Residues 147–155 (LALLPISWQ) lie on the Periplasmic side of the membrane. The helical transmembrane segment at 156-178 (LGVAALAGVPLLLGALWASAAFA) threads the bilayer. The Cytoplasmic portion of the chain corresponds to 179–237 (RRADTAADKANTALTERIIEFARTQQALRAARRVEPARSLVGNALASQHTATMRLLGMQ). The chain crosses the membrane as a helical span at residues 238-258 (IPGQLLFSIASQLALIVLAGT). At 259-579 (TAALTITGTL…EAAEWQILAE (321 aa)) the chain is on the periplasmic side. Residues 332–567 (IEFDDVAFGY…GGRFSQFWRQ (236 aa)) form the ABC transporter domain. An ATP-binding site is contributed by 366-373 (GPSGCGKS).

This sequence belongs to the ABC transporter superfamily. Siderophore-Fe(3+) uptake transporter (SIUT) (TC 3.A.1.21) family. As to quaternary structure, forms a heterodimer with IrtA.

It is found in the cell inner membrane. Part of the ABC transporter complex IrtAB involved in the import of iron-bound mycobactin (Fe-MBT) and carboxymycobactin (Fe-cMBT). Transmembrane domains (TMD) form a pore in the membrane and the ATP-binding domain (NBD) is responsible for energy generation. The chain is Mycobactin import ATP-binding/permease protein IrtB (irtB) from Mycobacterium bovis (strain ATCC BAA-935 / AF2122/97).